Here is a 484-residue protein sequence, read N- to C-terminus: Aldehyde dehydrogenase family 3 member F1 (484 aa).

Position 192-197 (192-197 (GSPKIG)) interacts with NAD(+). The active-site Proton acceptor is Glu-214. Residue Cys-252 is the Nucleophile of the active site.

This sequence belongs to the aldehyde dehydrogenase family. Homotetramer. Constituively expressed at low levels.

It carries out the reaction an aldehyde + NAD(+) + H2O = a carboxylate + NADH + 2 H(+). This Arabidopsis thaliana (Mouse-ear cress) protein is Aldehyde dehydrogenase family 3 member F1 (ALDH3F1).